A 437-amino-acid polypeptide reads, in one-letter code: Double-stranded RNA-binding protein 3 (437 aa).

Residues methionine 1–isoleucine 22 form a disordered region. DRBM domains are found at residues valine 35–lysine 104 and leucine 120–glycine 187. Basic and acidic residues-rich tracts occupy residues alanine 288–histidine 310 and aspartate 320–arginine 330. The segment at alanine 288–aspartate 331 is disordered.

Binds double-stranded RNA. The polypeptide is Double-stranded RNA-binding protein 3 (DRB3) (Oryza sativa subsp. japonica (Rice)).